A 456-amino-acid polypeptide reads, in one-letter code: Exodeoxyribonuclease 7 large subunit (456 aa).

This sequence belongs to the XseA family. In terms of assembly, heterooligomer composed of large and small subunits.

The protein resides in the cytoplasm. It carries out the reaction Exonucleolytic cleavage in either 5'- to 3'- or 3'- to 5'-direction to yield nucleoside 5'-phosphates.. Functionally, bidirectionally degrades single-stranded DNA into large acid-insoluble oligonucleotides, which are then degraded further into small acid-soluble oligonucleotides. This is Exodeoxyribonuclease 7 large subunit from Shigella flexneri serotype 5b (strain 8401).